Reading from the N-terminus, the 535-residue chain is uncharacterized protein (535 aa).

Residues 8 to 24 (LVVFGSLVFFFGLVKYF) form a helical membrane-spanning segment. A Glycyl lysine isopeptide (Lys-Gly) (interchain with G-Cter in ubiquitin) cross-link involves residue lysine 50. Mn(2+) is bound by residues aspartate 316, aspartate 327, histidine 412, glutamate 452, and glutamate 493.

It belongs to the peptidase M24B family. Requires Mn(2+) as cofactor.

The protein localises to the membrane. This is an uncharacterized protein from Saccharomyces cerevisiae (strain ATCC 204508 / S288c) (Baker's yeast).